The following is a 52-amino-acid chain: Large ribosomal subunit protein bL33 (52 aa).

This sequence belongs to the bacterial ribosomal protein bL33 family.

The protein is Large ribosomal subunit protein bL33 of Campylobacter jejuni subsp. doylei (strain ATCC BAA-1458 / RM4099 / 269.97).